Reading from the N-terminus, the 104-residue chain is L-rhamnose mutarotase (104 aa).

A substrate-binding site is contributed by Y18. The active-site Proton donor is H22. Substrate contacts are provided by residues Y41 and 76 to 77 (WW).

Belongs to the rhamnose mutarotase family. As to quaternary structure, homodimer.

Its subcellular location is the cytoplasm. The catalysed reaction is alpha-L-rhamnose = beta-L-rhamnose. The protein operates within carbohydrate metabolism; L-rhamnose metabolism. Functionally, involved in the anomeric conversion of L-rhamnose. The chain is L-rhamnose mutarotase from Burkholderia cenocepacia (strain HI2424).